The chain runs to 215 residues: Pyridoxine/pyridoxamine 5'-phosphate oxidase (215 aa).

Substrate contacts are provided by residues 9-12 and lysine 69; that span reads RRDY. FMN contacts are provided by residues 64 to 69, 79 to 80, lysine 86, and glutamine 108; these read RVLLLK and FT. Substrate is bound by residues tyrosine 126, arginine 130, and serine 134. Residues 143–144 and tryptophan 188 each bind FMN; that span reads QS. 194-196 is a binding site for substrate; it reads RLH. Arginine 198 is an FMN binding site.

This sequence belongs to the pyridoxamine 5'-phosphate oxidase family. As to quaternary structure, homodimer. It depends on FMN as a cofactor.

The enzyme catalyses pyridoxamine 5'-phosphate + O2 + H2O = pyridoxal 5'-phosphate + H2O2 + NH4(+). It carries out the reaction pyridoxine 5'-phosphate + O2 = pyridoxal 5'-phosphate + H2O2. Its pathway is cofactor metabolism; pyridoxal 5'-phosphate salvage; pyridoxal 5'-phosphate from pyridoxamine 5'-phosphate: step 1/1. It participates in cofactor metabolism; pyridoxal 5'-phosphate salvage; pyridoxal 5'-phosphate from pyridoxine 5'-phosphate: step 1/1. Functionally, catalyzes the oxidation of either pyridoxine 5'-phosphate (PNP) or pyridoxamine 5'-phosphate (PMP) into pyridoxal 5'-phosphate (PLP). The polypeptide is Pyridoxine/pyridoxamine 5'-phosphate oxidase (Pseudomonas savastanoi pv. phaseolicola (strain 1448A / Race 6) (Pseudomonas syringae pv. phaseolicola (strain 1448A / Race 6))).